The chain runs to 580 residues: Cis-3-hydroxy-L-proline dehydratase (580 aa).

The Proton acceptor role is filled by serine 66.

It belongs to the AcnX family. In terms of assembly, monomer. The cofactor is Fe(3+).

The catalysed reaction is cis-3-hydroxy-L-proline = 1-pyrroline-2-carboxylate + H2O. Inhibited by Zn(2+), Cd(2+) and Hg(2+), but not by Co(2+), Ni(2+), Mn(2+), Sr(2+), Mg(2+), or Fe(3+). Inhibited by pyrrole-2-carboxylate and its derivative 2-thiophenecarboxylate, but not by trans-aconitate, fluorocitrate and oxalomalate, which are typical inhibitors of the aconitase enzymes. Functionally, catalyzes the dehydration of cis-3-hydroxy-L-proline (c3LHyp) to Delta(1)-pyrroline-2-carboxylate (Pyr2C). Also has activity with (2S,3S,4R)-3,4-dihydroxyproline as substrate, albeit at about 300-fold lower rate. No activity with L-proline, trans-4-hydroxy-L-proline (t4LHyp), cis-4-hydroxy-L-proline (c4LHyp), trans-3-hydroxy-L-proline (t3LHyp), D-proline, cis-4-hydroxy-D-proline (c4DHyp), trans-4-hydroxy-D-proline (t4DHyp) or L-serine as substrates. No hydro-lyase activity with citrate or cis-acotinate. Does not catalyze 2-epimerization of c3LHyp to trans-3-hydroxy-D-proline (t3DHyp). Involved in a degradation pathway that converts c3LHyp to L-proline, which would allow P.aeruginosa to grow on c3LHyp as a sole carbon source. The sequence is that of Cis-3-hydroxy-L-proline dehydratase from Pseudomonas aeruginosa (strain ATCC 15692 / DSM 22644 / CIP 104116 / JCM 14847 / LMG 12228 / 1C / PRS 101 / PAO1).